Reading from the N-terminus, the 917-residue chain is Outer kinetochore KNL1 complex subunit SPC105 (917 aa).

Residues 1–17 (MNVDERSRIGGREKDAG) are compositionally biased toward basic and acidic residues. Positions 1–38 (MNVDERSRIGGREKDAGPGKGILKQNQSSQMTSSFLEN) are disordered. Polar residues predominate over residues 24-36 (KQNQSSQMTSSFL). S77 is subject to Phosphoserine. 3 disordered regions span residues 93–172 (QNNE…MEMT), 235–282 (TEYE…QPME), and 324–343 (HHIDESPSEKHAFSSNKRRK). Polar residues predominate over residues 106-126 (STNSPTKISSQEEPLVTSTQI). Basic and acidic residues predominate over residues 127–137 (DDARTEEKTAA). The MELT signature appears at 146 to 149 (MELT). Position 149 is a phosphothreonine; by MPS1 (T149). Positions 156-170 (PDSNKASQHDPTSME) are enriched in polar residues. The tract at residues 165 to 183 (DPTSMEMTEVFPRSIRQKN) is interacts with the BUB1-BUB3 complex. 2 consecutive short sequence motifs (MELT; degenerate) follow at residues 169 to 172 (MEMT) and 232 to 235 (IDLT). A phosphothreonine; by MPS1 mark is found at T172 and T235. Residues 245–257 (NSVSRSTGKSSDY) show a composition bias toward polar residues. 2 stretches are compositionally biased toward basic and acidic residues: residues 258–273 (SVERSNDKSDLSKSEN) and 324–335 (HHIDESPSEKHA). T356 is subject to Phosphothreonine. Residue S380 is modified to Phosphoserine. The interval 397–427 (DVFTIEPGTEDTGMQTATDDEEDGENVDDNG) is disordered. Positions 414-424 (TDDEEDGENVD) are enriched in acidic residues. The segment at 507–638 (PILEVEAFRC…IKEEIRSLKN (132 aa)) is required for interaction with KRE28. A coiled-coil region spans residues 591–628 (ELILAENLNTLKREYEKLNEEVEKVNSIRGKIRKLNEA).

In terms of assembly, component of the KNL1/SPC105 complex composed of SPC105 and KRE28. Part of the outer kinetochore KMN network that includes the KNL1, MIS12 and NDC80 complexes. Interacts (via phosphorylated MELT motifs) with BUB1 and BUB3 in the BUB1-BUB3 complex; the interaction is direct. Interacts with the MIS12 complex subunits MTW1 (via C-terminus) and NSL1 (via C-terminus). Interacts with the NDC80 complex subunits SPC24 and SPC25. Interacts with CNN1 (via N-terminus).

It localises to the nucleus. Its subcellular location is the chromosome. The protein resides in the centromere. The protein localises to the kinetochore. Functionally, acts as a component of the outer kinetochore KNL1 complex that serves as a docking point for spindle assembly checkpoint components and mediates microtubule-kinetochore interactions. Kinetochores, consisting of a centromere-associated inner segment and a microtubule-contacting outer segment, play a crucial role in chromosome segregation by mediating the physical connection between centromeric DNA and spindle microtubules. The outer kinetochore is made up of the ten-subunit KMN network, comprising the MIS12, NDC80 and KNL1 complexes, and auxiliary microtubule-associated components; together they connect the outer kinetochore with the inner kinetochore, bind microtubules, and mediate interactions with mitotic checkpoint proteins that delay anaphase until chromosomes are bioriented on the spindle. Recruits the BUB1-BUB3 complex to kinetochores when phosphorylated by MPS1, to support spindle assembly checkpoint signaling; the effect is reversed by protein phosphatase 1 (PP1). The KNL1 complex is required for kinetochore binding by the kMAPs (kinetochore-bound microtubule-associated proteins) BIM1, BIK1 and SLK19, and motors CIN8 and KAR3. The protein is Outer kinetochore KNL1 complex subunit SPC105 (SPC105) of Saccharomyces cerevisiae (strain ATCC 204508 / S288c) (Baker's yeast).